A 141-amino-acid polypeptide reads, in one-letter code: Large ribosomal subunit protein uL13 (141 aa).

This sequence belongs to the universal ribosomal protein uL13 family. As to quaternary structure, part of the 50S ribosomal subunit.

This protein is one of the early assembly proteins of the 50S ribosomal subunit, although it is not seen to bind rRNA by itself. It is important during the early stages of 50S assembly. This is Large ribosomal subunit protein uL13 from Deinococcus deserti (strain DSM 17065 / CIP 109153 / LMG 22923 / VCD115).